A 91-amino-acid polypeptide reads, in one-letter code: Probable Fe(2+)-trafficking protein (91 aa).

Belongs to the Fe(2+)-trafficking protein family. Monomer.

Functionally, could be a mediator in iron transactions between iron acquisition and iron-requiring processes, such as synthesis and/or repair of Fe-S clusters in biosynthetic enzymes. This chain is Probable Fe(2+)-trafficking protein, found in Salmonella agona (strain SL483).